The following is a 1116-amino-acid chain: MERAISPGLLVRALLLLLLLLGLAARTVAAGRARGLPAPTAEAAFGLGAAAAPTSATRVPAAGAVAAAEVTVEDAEALPAAAGEQEPRGPEPDDETELRPRGRSLVIISTLDGRIAALDPENHGKKQWDLDVGSGSLVSSSLSKPEVFGNKMIIPSLDGALFQWDQDRESMETVPFTVESLLESSYKFGDDVVLVGGKSLTTYGLSAYSGKVRYICSALGCRQWDSDEMEQEEDILLLQRTQKTVRAVGPRSGNEKWNFSVGHFELRYIPDMETRAGFIESTFKPNENTEESKIISDVEEQEAAIMDIVIKVSVADWKVMAFSKKGGHLEWEYQFCTPIASAWLLKDGKVIPISLFDDTSYTSNDDVLEDEEDIVEAARGATENSVYLGMYRGQLYLQSSVRISEKFPSSPKALESVTNENAIIPLPTIKWKPLIHSPSRTPVLVGSDEFDKCLSNDKFSHEEYSNGALSILQYPYDNGYYLPYYKRERNKRSTQITVRFLDNPHYNKNIRKKDPVLLLHWWKEIVATILFCIIATTFIVRRLFHPHPHRQRKESETQCQTENKYDSVSGEANDSSWNDIKNSGYISRYLTDFEPIQCLGRGGFGVVFEAKNKVDDCNYAIKRIRLPNRELAREKVMREVKALAKLEHPGIVRYFNAWLEAPPEKWQEKMDEIWLKDESTDWPLSSPSPMDAPSVKIRRMDPFATKEHIEIIAPSPQRSRSFSVGISCDQTSSSESQFSPLEFSGMDHEDISESVDAAYNLQDSCLTDCDVEDGTMDGNDEGHSFELCPSEASPYVRSRERTSSSIVFEDSGCDNASSKEEPKTNRLHIGNHCANKLTAFKPTSSKSSSEATLSISPPRPTTLSLDLTKNTTEKLQPSSPKVYLYIQMQLCRKENLKDWMNGRCTIEERERSVCLHIFLQIAEAVEFLHSKGLMHRDLKPSNIFFTMDDVVKVGDFGLVTAMDQDEEEQTVLTPMPAYARHTGQVGTKLYMSPEQIHGNSYSHKVDIFSLGLILFELLYPFSTQMERVRTLTDVRNLKFPPLFTQKYPCEYVMVQDMLSPSPMERPEAINIIENAVFEDLDFPGKTVLRQRSRSLSSSGTKHSRQSNNSHSPLPSN.

Positions 1–29 are cleaved as a signal peptide; the sequence is MERAISPGLLVRALLLLLLLLGLAARTVA. The Lumenal portion of the chain corresponds to 30–514; sequence AGRARGLPAP…HYNKNIRKKD (485 aa). Residues 77–101 are disordered; it reads ALPAAAGEQEPRGPEPDDETELRPR. Asparagine 258 carries N-linked (GlcNAc...) asparagine glycosylation. Residues 515-535 traverse the membrane as a helical segment; that stretch reads PVLLLHWWKEIVATILFCIIA. Residues 536 to 1116 are Cytoplasmic-facing; it reads TTFIVRRLFH…NNSHSPLPSN (581 aa). The segment at 550 to 571 is disordered; sequence RQRKESETQCQTENKYDSVSGE. In terms of domain architecture, Protein kinase spans 593 to 1077; that stretch reads FEPIQCLGRG…AINIIENAVF (485 aa). Residue 599 to 607 participates in ATP binding; the sequence is LGRGGFGVV. Phosphotyrosine; by autocatalysis is present on tyrosine 619. An ATP-binding site is contributed by lysine 622. The tract at residues 647–888 is insert loop; sequence EHPGIVRYFN…SPKVYLYIQM (242 aa). Serine 715 bears the Phosphoserine mark. At threonine 802 the chain carries Phosphothreonine. The interval 841 to 863 is disordered; it reads KPTSSKSSSEATLSISPPRPTTL. Positions 844–856 are enriched in low complexity; that stretch reads SSKSSSEATLSIS. The active-site Proton acceptor is aspartate 937. A Phosphothreonine modification is found at threonine 982. Positions 1090-1116 are disordered; that stretch reads QRSRSLSSSGTKHSRQSNNSHSPLPSN. Position 1094 is a phosphoserine (serine 1094). Over residues 1105-1116 the composition is skewed to polar residues; it reads QSNNSHSPLPSN.

The protein belongs to the protein kinase superfamily. Ser/Thr protein kinase family. GCN2 subfamily. Forms dimers with HSPA5/BIP in resting cells. Homotetramerizes in response to endoplasmic reticulum (ER) stress, leading to its activation. Interacts with HSP90B1/GRP94. Interacts with DNAJC3; inhibiting EIF2AK3/PERK activity. Interacts with ATAD3A; ATAD3A and EIF2S1/eIF-2-alpha occupy a common binding site within the cytoplasmic loop of EIF2AK3/PERK, leading to prevent EIF2AK3/PERK association with its substrate EIF2S1/eIF-2-alpha. Interacts with MFN2. Interacts with TMEM33. Interacts with PDIA6. Interacts with LACC1. Oligomerization of the N-terminal ER luminal domain by ER stress promotes EIF2AK3/PERK trans-autophosphorylation of the C-terminal cytoplasmic kinase domain at multiple residues including Thr-982 on the kinase activation loop. Autophosphorylated at Tyr-619 following endoplasmic reticulum stress, leading to activate its activity. Dephosphorylated at Tyr-619 by PTPN1/PTP1B, leading to inactivate its enzyme activity. Phosphorylation at Thr-802 by AKT (AKT1, AKT2 and/or AKT3) inactivates EIF2AK3/PERK. Post-translationally, ADP-ribosylated by PARP16 upon ER stress, which increases kinase activity. Ubiquitous. A high level expression is seen in secretory tissues.

Its subcellular location is the endoplasmic reticulum membrane. It catalyses the reaction L-seryl-[protein] + ATP = O-phospho-L-seryl-[protein] + ADP + H(+). It carries out the reaction L-threonyl-[protein] + ATP = O-phospho-L-threonyl-[protein] + ADP + H(+). The enzyme catalyses L-tyrosyl-[protein] + ATP = O-phospho-L-tyrosyl-[protein] + ADP + H(+). Its activity is regulated as follows. Inhibited by HSPA5/BIP in absence of stress. Perturbation in protein folding in the endoplasmic reticulum (ER) promotes reversible dissociation from HSPA5/BIP and oligomerization, resulting in trans-autophosphorylation and kinase activity induction. Inactivated following phosphorylation at Thr-802 by AKT (AKT1, AKT2 and/or AKT3). Inhibited by ATAD3A at mitochondria-endoplasmic reticulum contact sites, providing a safe haven for mitochondrial protein translation during ER stress. Its function is as follows. Metabolic-stress sensing protein kinase that phosphorylates the alpha subunit of eukaryotic translation initiation factor 2 (EIF2S1/eIF-2-alpha) in response to various stress, such as unfolded protein response (UPR). Key effector of the integrated stress response (ISR) to unfolded proteins: EIF2AK3/PERK specifically recognizes and binds misfolded proteins, leading to its activation and EIF2S1/eIF-2-alpha phosphorylation. EIF2S1/eIF-2-alpha phosphorylation in response to stress converts EIF2S1/eIF-2-alpha in a global protein synthesis inhibitor, leading to a global attenuation of cap-dependent translation, while concomitantly initiating the preferential translation of ISR-specific mRNAs, such as the transcriptional activators ATF4 and QRICH1, and hence allowing ATF4- and QRICH1-mediated reprogramming. The EIF2AK3/PERK-mediated unfolded protein response increases mitochondrial oxidative phosphorylation by promoting ATF4-mediated expression of COX7A2L/SCAF1, thereby increasing formation of respiratory chain supercomplexes. In contrast to most subcellular compartments, mitochondria are protected from the EIF2AK3/PERK-mediated unfolded protein response due to EIF2AK3/PERK inhibition by ATAD3A at mitochondria-endoplasmic reticulum contact sites. In addition to EIF2S1/eIF-2-alpha, also phosphorylates NFE2L2/NRF2 in response to stress, promoting release of NFE2L2/NRF2 from the BCR(KEAP1) complex, leading to nuclear accumulation and activation of NFE2L2/NRF2. Serves as a critical effector of unfolded protein response (UPR)-induced G1 growth arrest due to the loss of cyclin-D1 (CCND1). Involved in control of mitochondrial morphology and function. This is Eukaryotic translation initiation factor 2-alpha kinase 3 from Homo sapiens (Human).